Consider the following 115-residue polypeptide: Parathyroid hormone (115 aa).

The first 25 residues, 1-25 (MMSAKNMVKVMIVMFAIFLLAKSDG), serve as a signal peptide directing secretion. The propeptide occupies 26 to 31 (KPVRKR). An important for receptor binding region spans residues 51–69 (RVEWLRKKLQDVHNFIALG). A disordered region spans residues 73–115 (FHRDGGSQRPRKKEDNVLIESHQKSLGEADKADVDVLSKTKSQ).

This sequence belongs to the parathyroid hormone family. In terms of assembly, interacts with PTH1R (via N-terminal extracellular domain).

It localises to the secreted. Its function is as follows. Parathyroid hormone elevates calcium level by dissolving the salts in bone and preventing their renal excretion. Acts by binding to its receptor, PTH1R, activating G protein-coupled receptor signaling. Stimulates [1-14C]-2-deoxy-D-glucose (2DG) transport and glycogen synthesis in osteoblastic cells. This Equus caballus (Horse) protein is Parathyroid hormone (PTH).